A 90-amino-acid polypeptide reads, in one-letter code: Aminoacyl carrier protein 1 (90 aa).

A Carrier domain is found at 6-84 (TDVRNRIIKL…TLERMVMTQL (79 aa)). Ser42 is subject to O-(pantetheine 4'-phosphoryl)serine.

Post-translationally, 4'-phosphopantetheine is transferred from CoA to a specific serine of the apo-form of this carrier protein.

Aminoacyl carrier protein. Can be charged with L-glycine via the formation of a thioester bond between the amino acid and the 4'-phosphopantetheinyl prosthetic group, catalyzed by the bll0957 ligase. This is Aminoacyl carrier protein 1 from Bradyrhizobium diazoefficiens (strain JCM 10833 / BCRC 13528 / IAM 13628 / NBRC 14792 / USDA 110).